Here is a 233-residue protein sequence, read N- to C-terminus: Chalcone--flavanone isomerase (233 aa).

Residues threonine 47, asparagine 113, and serine 192 each contribute to the substrate site.

The protein belongs to the chalcone isomerase family.

It catalyses the reaction a chalcone = a flavanone.. The protein operates within secondary metabolite biosynthesis; flavonoid biosynthesis. Catalyzes the intramolecular cyclization of bicyclic chalcones into tricyclic (S)-flavanones. Responsible for the isomerization of 4,2',4',6'-tetrahydroxychalcone (also termed chalcone) into naringenin. The sequence is that of Chalcone--flavanone isomerase (CHI) from Oryza sativa subsp. japonica (Rice).